The sequence spans 819 residues: Nuclear pore complex protein Nup93 (819 aa).

Threonine 49 bears the Phosphothreonine mark. Phosphoserine is present on residues serine 52, serine 66, serine 72, serine 75, serine 80, serine 430, and serine 767.

It belongs to the nucleoporin interacting component (NIC) family. As to quaternary structure, part of the nuclear pore complex (NPC). Component of the p62 complex, a complex composed of NUP62 and NUP54. Forms a complex with NUP35, NUP155, NUP205 and lamin B; the interaction with NUP35 is direct. Does not interact with TPR. Interacts with SMAD4 and IPO7; translocates SMAD4 to the nucleus through the NPC upon BMP7 stimulation resulting in activation of SMAD4 signaling.

It localises to the nucleus membrane. The protein resides in the nucleus. It is found in the nuclear pore complex. The protein localises to the nucleus envelope. Functionally, plays a role in the nuclear pore complex (NPC) assembly and/or maintenance. May anchor nucleoporins, but not NUP153 and TPR, to the NPC. During renal development, regulates podocyte migration and proliferation through SMAD4 signaling. The polypeptide is Nuclear pore complex protein Nup93 (NUP93) (Bos taurus (Bovine)).